We begin with the raw amino-acid sequence, 293 residues long: SAGA-associated factor 29 (293 aa).

Residues 3–88 (LVSADSRIAE…KALDKIAEIK (86 aa)) adopt a coiled-coil conformation. In terms of domain architecture, SGF29 C-terminal spans 152 to 293 (GDYVAKPGDK…VVACKEPKKK (142 aa)). 2 histone H3K4me3 N-terminus binding regions span residues 194 to 196 (DID) and 240 to 243 (QTTC). Positions 264–266 (FED) are histone H3K4me3 binding. Lysine 288 carries the post-translational modification N6-acetyllysine.

Belongs to the SGF29 family. Interacts with dimethylated and trimethylated 'Lys-4' of histone H3 (H3K4me2 and H3K4me3), with a preference for the trimethylated form (H3K4me3). Component of some SAGA-type complexes. Component of the ADA2A-containing complex (ATAC), composed of KAT14, KAT2A, TADA2L, TADA3L, ZZ3, MBIP, WDR5, YEATS2, CCDC101 and DR1. Interacts with (methylated) CGAS. Interacts with TADA3L, GCN5L2, SUPT3H and MYC. As to expression, widely expressed with highest levels in testis. Highly expressed in hepatoma and other tumor cell lines.

Its subcellular location is the nucleus. Functionally, chromatin reader component of some histone acetyltransferase (HAT) SAGA-type complexes like the TFTC-HAT, ATAC or STAGA complexes. SGF29 specifically recognizes and binds methylated 'Lys-4' of histone H3 (H3K4me), with a preference for trimethylated form (H3K4me3). In the SAGA-type complexes, SGF29 is required to recruit complexes to H3K4me. Involved in the response to endoplasmic reticulum (ER) stress by recruiting the SAGA complex to H3K4me, thereby promoting histone H3 acetylation and cell survival. Also binds non-histone proteins that are methylated on Lys residues: specifically recognizes and binds CGAS monomethylated on 'Lys-491'. May be involved in MYC-mediated oncogenic transformation. The chain is SAGA-associated factor 29 from Rattus norvegicus (Rat).